The sequence spans 502 residues: MFS-type transporeter aprT (502 aa).

Residues 1 to 38 are disordered; that stretch reads MASPELASHHSDPSDGEGAPFLPGVDDESPESLNSDIP. 11 helical membrane-spanning segments follow: residues 45-65, 114-136, 150-170, 175-195, 214-234, 239-259, 302-322, 336-356, 380-400, 403-423, and 464-484; these read HGLI…GPMI, IGYR…GLLA, VGFV…NIFP, WFGA…ALFW, FGIA…FVMK, VPLM…NLLP, VAVI…AFLV, ATLL…FILP, VMLL…NTLI, LLLH…ITGL, and LWIG…ALVL. A glycan (N-linked (GlcNAc...) asparagine) is linked at Asn495.

Belongs to the major facilitator superfamily.

It localises to the cell membrane. Its function is as follows. MFS-rype transporer; part of the gene cluster that mediates the biosynthesis of the asperipin-2a, a bicyclic peptide that possesses two macrocyclic ether rings consisting of 14- and 17-membered paracyclophans. AprT is likely to be involved in the cellular export of asperipin-2a. The sequence is that of MFS-type transporeter aprT from Aspergillus flavus (strain ATCC 200026 / FGSC A1120 / IAM 13836 / NRRL 3357 / JCM 12722 / SRRC 167).